We begin with the raw amino-acid sequence, 218 residues long: MEPNFWHDKWHQQLIGFHQASVNALLLTHWQQLEIKPQGQVFVPLCGKSLDMCYLAELGHNVLGCELNLSAVEQFYAENQLTVTCEPIGEHQFFDCEQVQIWQGDIFTLAPKITQDISGFYDRAALIAWPESLRQAYVKQLAKLIPQGCRGLLVTLDYPQETLQGPPFAVSPTWVETHLSEYFDITLLACRDVLDDNPRFIKKDVPWLNESAYLLKRK.

Residues Trp10, Leu45, Glu66, and Arg123 each contribute to the S-adenosyl-L-methionine site.

This sequence belongs to the class I-like SAM-binding methyltransferase superfamily. TPMT family.

Its subcellular location is the cytoplasm. It catalyses the reaction S-adenosyl-L-methionine + a thiopurine = S-adenosyl-L-homocysteine + a thiopurine S-methylether.. This chain is Thiopurine S-methyltransferase, found in Shewanella denitrificans (strain OS217 / ATCC BAA-1090 / DSM 15013).